The primary structure comprises 485 residues: Glutamyl-tRNA(Gln) amidotransferase subunit A (485 aa).

Catalysis depends on charge relay system residues lysine 79 and serine 154. Residue serine 178 is the Acyl-ester intermediate of the active site.

It belongs to the amidase family. GatA subfamily. As to quaternary structure, heterotrimer of A, B and C subunits.

The enzyme catalyses L-glutamyl-tRNA(Gln) + L-glutamine + ATP + H2O = L-glutaminyl-tRNA(Gln) + L-glutamate + ADP + phosphate + H(+). Its function is as follows. Allows the formation of correctly charged Gln-tRNA(Gln) through the transamidation of misacylated Glu-tRNA(Gln) in organisms which lack glutaminyl-tRNA synthetase. The reaction takes place in the presence of glutamine and ATP through an activated gamma-phospho-Glu-tRNA(Gln). The chain is Glutamyl-tRNA(Gln) amidotransferase subunit A from Bacillus pumilus (strain SAFR-032).